Here is a 36-residue protein sequence, read N- to C-terminus: Pancreatic polypeptide (36 aa).

Tyr36 is subject to Tyrosine amide.

The protein belongs to the NPY family.

Its subcellular location is the secreted. In terms of biological role, hormone secreted by pancreatic cells that acts as a regulator of pancreatic and gastrointestinal functions. This Meleagris gallopavo (Wild turkey) protein is Pancreatic polypeptide (PPY).